The primary structure comprises 642 residues: Sodium-dependent phosphate transport protein 2A (642 aa).

Residues 1-106 are Cytoplasmic-facing; sequence MISYGEQLSS…LRRTAMTLLK (106 aa). Phosphoserine occurs at positions 14 and 37. The chain crosses the membrane as a helical span at residues 107–128; the sequence is LPLMVTFLYLFVCSLDVLSSAF. Topologically, residues 129 to 148 are extracellular; sequence QLAGGKVAGDIFKDNAILAN. Residues 149–166 form a helical membrane-spanning segment; it reads PVAGLVVGILVTVLVQSS. Over 167 to 168 the chain is Cytoplasmic; the sequence is ST. A helical membrane pass occupies residues 169–188; the sequence is ATSIIVSMVSSGLLEVSSAI. Residues 189–350 lie on the Extracellular side of the membrane; that stretch reads PIIMGSNIGT…HIFVDTQLPD (162 aa). Disulfide bonds link Cys228–Cys525 and Cys309–Cys339. N-linked (GlcNAc...) asparagine glycosylation is found at Asn301, Asn326, and Asn333. The chain crosses the membrane as a helical span at residues 351–373; sequence LAVGLILLAGSLVLLCTCLILLV. The Cytoplasmic portion of the chain corresponds to 374 to 415; the sequence is KMLNSLLKGQVAKVIQKVINTDLPAPFTWVTGYFAMVVGAAM. A helical transmembrane segment spans residues 416–439; the sequence is TFIVQSSSVFTSAITPLVGLGVIS. At 440–469 the chain is on the extracellular side; that stretch reads IERAYPLTLGSNIGTTTTAILAALASPREK. The chain crosses the membrane as a helical span at residues 470 to 490; sequence LSSSFQIALCHFFFNISGILL. The Cytoplasmic segment spans residues 491 to 516; that stretch reads WYPLPCTRLPIRMAKALGKRTAKYRW. Thr511 carries the post-translational modification Phosphothreonine; by PKC. Residues 517–537 form a helical membrane-spanning segment; that stretch reads FAVLYLLVCFLLLPSLVFGIS. At 538 to 542 the chain is on the extracellular side; sequence MAGWR. Residues 543 to 564 traverse the membrane as a helical segment; the sequence is AMVGVGAPFGALLAFVVLINVL. The Cytoplasmic portion of the chain corresponds to 565–642; it reads QSRSPGRLPK…LPAHHNATRL (78 aa). Phosphoserine is present on Ser610. At Thr626 the chain carries Phosphothreonine. Ser628 is modified (phosphoserine).

This sequence belongs to the SLC34A transporter family. In terms of assembly, interacts via its C-terminal region with NHERF4. Interacts with NHERF1. Interacts with TMEM174; regulates SLC34A1 internalization by PTH and FGF23. Expressed in the kidney cortex.

The protein localises to the apical cell membrane. It is found in the cell membrane. It catalyses the reaction 3 Na(+)(out) + phosphate(out) = 3 Na(+)(in) + phosphate(in). With respect to regulation, transport activity is significantly increased in response to dietary phosphate deprivation. In terms of biological role, involved in actively transporting phosphate into cells via Na(+) cotransport in the renal brush border membrane. The cotransport has a Na(+):Pi stoichiometry of 3:1 and is electrogenic. The chain is Sodium-dependent phosphate transport protein 2A from Oryctolagus cuniculus (Rabbit).